The chain runs to 126 residues: Larval cuticle protein 2 (126 aa).

The signal sequence occupies residues 1 to 16 (MFKFVMILAVVGVATA). Residues 39–100 (ADGFDSSLHT…PSGAWIPTPP (62 aa)) form the Chitin-binding type R&amp;R domain.

Its function is as follows. Component of the larval cuticle. In Drosophila melanogaster (Fruit fly), this protein is Larval cuticle protein 2 (Lcp2).